Here is a 290-residue protein sequence, read N- to C-terminus: tRNA pseudouridine synthase A (290 aa).

Asp-56 acts as the Nucleophile in catalysis. Tyr-109 serves as a coordination point for substrate.

Belongs to the tRNA pseudouridine synthase TruA family.

It carries out the reaction uridine(38/39/40) in tRNA = pseudouridine(38/39/40) in tRNA. Its function is as follows. Formation of pseudouridine at positions 38, 39 and 40 in the anticodon stem and loop of transfer RNAs. The polypeptide is tRNA pseudouridine synthase A (Methanobrevibacter smithii (strain ATCC 35061 / DSM 861 / OCM 144 / PS)).